Reading from the N-terminus, the 293-residue chain is Formamidopyrimidine-DNA glycosylase (293 aa).

Residue Pro-2 is the Schiff-base intermediate with DNA of the active site. Glu-3 functions as the Proton donor in the catalytic mechanism. The Proton donor; for beta-elimination activity role is filled by Lys-60. DNA is bound by residues His-110, Arg-129, and Arg-174. Residues Asn-259 to Lys-293 form an FPG-type zinc finger. Arg-283 serves as the catalytic Proton donor; for delta-elimination activity.

Belongs to the FPG family. In terms of assembly, monomer. Zn(2+) serves as cofactor.

The enzyme catalyses Hydrolysis of DNA containing ring-opened 7-methylguanine residues, releasing 2,6-diamino-4-hydroxy-5-(N-methyl)formamidopyrimidine.. The catalysed reaction is 2'-deoxyribonucleotide-(2'-deoxyribose 5'-phosphate)-2'-deoxyribonucleotide-DNA = a 3'-end 2'-deoxyribonucleotide-(2,3-dehydro-2,3-deoxyribose 5'-phosphate)-DNA + a 5'-end 5'-phospho-2'-deoxyribonucleoside-DNA + H(+). In terms of biological role, involved in base excision repair of DNA damaged by oxidation or by mutagenic agents. Acts as a DNA glycosylase that recognizes and removes damaged bases. Has a preference for oxidized purines, such as 7,8-dihydro-8-oxoguanine (8-oxoG). Has AP (apurinic/apyrimidinic) lyase activity and introduces nicks in the DNA strand. Cleaves the DNA backbone by beta-delta elimination to generate a single-strand break at the site of the removed base with both 3'- and 5'-phosphates. This chain is Formamidopyrimidine-DNA glycosylase, found in Prochlorococcus marinus (strain MIT 9312).